The sequence spans 360 residues: Alanine racemase (360 aa).

The active-site Proton acceptor; specific for D-alanine is Lys34. Position 34 is an N6-(pyridoxal phosphate)lysine (Lys34). Residue Arg129 coordinates substrate. Tyr254 functions as the Proton acceptor; specific for L-alanine in the catalytic mechanism. Met302 is a substrate binding site.

This sequence belongs to the alanine racemase family. The cofactor is pyridoxal 5'-phosphate.

The catalysed reaction is L-alanine = D-alanine. The protein operates within amino-acid biosynthesis; D-alanine biosynthesis; D-alanine from L-alanine: step 1/1. In terms of biological role, catalyzes the interconversion of L-alanine and D-alanine. May also act on other amino acids. This chain is Alanine racemase (alr), found in Pectobacterium atrosepticum (strain SCRI 1043 / ATCC BAA-672) (Erwinia carotovora subsp. atroseptica).